A 206-amino-acid polypeptide reads, in one-letter code: Large ribosomal subunit protein uL4 (206 aa).

The disordered stretch occupies residues 47 to 76 (GTQSAKTRAEVSGGGIKPWRQKGTGRARQG).

Belongs to the universal ribosomal protein uL4 family. As to quaternary structure, part of the 50S ribosomal subunit.

Its function is as follows. One of the primary rRNA binding proteins, this protein initially binds near the 5'-end of the 23S rRNA. It is important during the early stages of 50S assembly. It makes multiple contacts with different domains of the 23S rRNA in the assembled 50S subunit and ribosome. Forms part of the polypeptide exit tunnel. The polypeptide is Large ribosomal subunit protein uL4 (Clostridium botulinum (strain Okra / Type B1)).